Reading from the N-terminus, the 412-residue chain is Putative potassium channel protein RPA4233 (412 aa).

A run of 5 helical transmembrane segments spans residues 35–55 (FIVFFIVLSVGITVMESVPAM), 65–85 (ALELLCLVMFSIEYYIRIWIA), 164–184 (LMACLVILACATLVSATAMHI), 202–222 (WWAIVTLSTIGYGDVVPATGI), and 225–245 (MVASATIICGLIMIALPVGIV). Positions 210–215 (TIGYGD) match the Selectivity filter motif. 270 to 388 (LFSHLTAGDI…RKINQIVEGR (119 aa)) provides a ligand contact to a nucleoside 3',5'-cyclic phosphate.

This sequence belongs to the potassium channel family.

Its subcellular location is the cell membrane. This Rhodopseudomonas palustris (strain ATCC BAA-98 / CGA009) protein is Putative potassium channel protein RPA4233.